Here is a 238-residue protein sequence, read N- to C-terminus: Dof zinc finger protein MNB1A (238 aa).

A compositionally biased stretch (low complexity) spans 1–13; sequence MQEASSAAAAGAE. Residues 1 to 48 are disordered; sequence MQEASSAAAAGAEPGRRAAQHQFAGVDLRRPKGYAAPAPAPAVGEGDP. The segment at 47–101 adopts a Dof-type zinc-finger fold; the sequence is DPCPRCASRDTKFCYYNNYNTSQPRHFCKGCRRYWTKGGTLRNVPVGGGTRKKPS. The Zn(2+) site is built by Cys-49, Cys-52, Cys-74, and Cys-77. The disordered stretch occupies residues 85-155; that stretch reads GTLRNVPVGG…TATTTTTTSE (71 aa). Over residues 119–130 the composition is skewed to basic residues; that stretch reads PKKKPASKKRRV. Residues 138-155 show a composition bias toward low complexity; that stretch reads ATAADPGKTATTTTTTSE.

In terms of tissue distribution, expressed in all tissues examined.

The protein localises to the nucleus. In terms of biological role, transcription factor that binds specifically to a 5'-AA[AG]G-3' consensus core sequence at the MNF1-binding site. The chain is Dof zinc finger protein MNB1A (MNB1A) from Zea mays (Maize).